The primary structure comprises 218 residues: MSENEIKGILGTKLGMTQVFDEENRVVPVTVVEAGPCVVTQIRTKETDGYNAIQIAFGEKDPRKVNKPATGHFKKAGVTPRRYVAEIRMDDTSAYEVGQEVKVDIFEGVSFVDVTGTTKGHGYAGAMKRHGFAGQGAAHGNQAAHRRVGGIGGASFPGRVFKGKRMAGRMGQDRVTTQNLKIQKIDAESNLLLIKGAIPGARGGLVTVKTAVKGGAHA.

This sequence belongs to the universal ribosomal protein uL3 family. As to quaternary structure, part of the 50S ribosomal subunit. Forms a cluster with proteins L14 and L19.

Functionally, one of the primary rRNA binding proteins, it binds directly near the 3'-end of the 23S rRNA, where it nucleates assembly of the 50S subunit. The protein is Large ribosomal subunit protein uL3 of Corynebacterium aurimucosum (strain ATCC 700975 / DSM 44827 / CIP 107346 / CN-1) (Corynebacterium nigricans).